The following is a 94-amino-acid chain: Small ribosomal subunit protein uS19 (94 aa).

The protein belongs to the universal ribosomal protein uS19 family.

In terms of biological role, protein S19 forms a complex with S13 that binds strongly to the 16S ribosomal RNA. The chain is Small ribosomal subunit protein uS19 from Endomicrobium trichonymphae.